Reading from the N-terminus, the 352-residue chain is MPRKKVLVVDDSAFMRKMIGDMINSDDELEIVGKAGNGQEALEKIRELQPDVVVMDIEMPVLDGLSTLSRIMESQALPVIIFSSLSQKGTEQTLKALQLGAVDFIAKPSGQISLDVLSVKEELIKKLKVAANTSRKLPVYQSLHEPVVKAKKSLPDQDRKLNKLVVIAASTGGPKALHQVIPRFPAGIDAAILVVQHMPPGFTRSLAERLDSLSELRVKEAEHGEKVLPACVYIAPGDYHLKAKSRLKGTENELYIELDQSKPRGGLRPAADIMLKSVAKQFWSHIVCVIMTGMGNDGAAALPCIKEKKGRIIAEHQSTCVVYGMPKAAVETGLVDKIVPLSEITEEVLSML.

Residues Lys5–Glu122 form the Response regulatory domain. Residue Asp56 is modified to 4-aspartylphosphate. In terms of domain architecture, CheB-type methylesterase spans Pro155–Leu352. Active-site residues include Ser170, His197, and Asp297.

The protein belongs to the CheB family. Post-translationally, phosphorylated by CheA. Phosphorylation of the N-terminal regulatory domain activates the methylesterase activity.

Its subcellular location is the cytoplasm. The catalysed reaction is [protein]-L-glutamate 5-O-methyl ester + H2O = L-glutamyl-[protein] + methanol + H(+). It catalyses the reaction L-glutaminyl-[protein] + H2O = L-glutamyl-[protein] + NH4(+). Functionally, involved in chemotaxis. Part of a chemotaxis signal transduction system that modulates chemotaxis in response to various stimuli. Catalyzes the demethylation of specific methylglutamate residues introduced into the chemoreceptors (methyl-accepting chemotaxis proteins or MCP) by CheR. Also mediates the irreversible deamidation of specific glutamine residues to glutamic acid. This chain is Protein-glutamate methylesterase/protein-glutamine glutaminase 1, found in Syntrophomonas wolfei subsp. wolfei (strain DSM 2245B / Goettingen).